Reading from the N-terminus, the 108-residue chain is Pyrimidine/purine nucleoside phosphorylase (108 aa).

This sequence belongs to the nucleoside phosphorylase PpnP family.

The enzyme catalyses a purine D-ribonucleoside + phosphate = a purine nucleobase + alpha-D-ribose 1-phosphate. The catalysed reaction is adenosine + phosphate = alpha-D-ribose 1-phosphate + adenine. It catalyses the reaction cytidine + phosphate = cytosine + alpha-D-ribose 1-phosphate. It carries out the reaction guanosine + phosphate = alpha-D-ribose 1-phosphate + guanine. The enzyme catalyses inosine + phosphate = alpha-D-ribose 1-phosphate + hypoxanthine. The catalysed reaction is thymidine + phosphate = 2-deoxy-alpha-D-ribose 1-phosphate + thymine. It catalyses the reaction uridine + phosphate = alpha-D-ribose 1-phosphate + uracil. It carries out the reaction xanthosine + phosphate = alpha-D-ribose 1-phosphate + xanthine. Catalyzes the phosphorolysis of diverse nucleosides, yielding D-ribose 1-phosphate and the respective free bases. Can use uridine, adenosine, guanosine, cytidine, thymidine, inosine and xanthosine as substrates. Also catalyzes the reverse reactions. In Acinetobacter baylyi (strain ATCC 33305 / BD413 / ADP1), this protein is Pyrimidine/purine nucleoside phosphorylase.